Reading from the N-terminus, the 538-residue chain is Cytochrome P450 monooxygenase okaG (538 aa).

A helical transmembrane segment spans residues 3-23; it reads LISPLAAVLSAMAIVLGLLFF. Cys-484 serves as a coordination point for heme.

This sequence belongs to the cytochrome P450 family. Heme is required as a cofactor.

Its subcellular location is the membrane. The catalysed reaction is 12-deshydroxyl okaramine E + 2 reduced [NADPH--hemoprotein reductase] + 2 O2 = 3-desmethyl okaramine B + 2 oxidized [NADPH--hemoprotein reductase] + 2 H2O + 2 H(+). It participates in alkaloid biosynthesis. Nonribosomal peptide synthetase; part of the gene cluster that mediates the biosynthesis of okaramine B, a prenylated indole alkaloid that possesses an unusual octacyclic ring system, including a four-membered azetidine ring and an eight-membered azocine ring, and that exhibits insecticidal activity against silkworm larvae. Within the pathway, okaG acts as a 2,3-diol synthase that installs 2,3-diol on the okaramine scaffold to convert 12-deshydroxyl okaramine E into 3-desmethyl okaramine B. OkaG is also able to produce use okaramine E and produce okaramine D with the help of the methyltransferase okaF. The biosynthesis begins with the NRPS okaA that condenses two tryptophan molecules into cyclo(L-Trp-L-Trp). Prenylation by the prenyltransferase okaC then leads to the formation of cyclo(N8-(alpha,alpha-dimethylallyl)-L-Trp-6a-(alpha,alpha-dime-thylallyl)-L-Trp). This is followed by indole 2,3-epoxidation by the FAD-dependent monooxygenase okaB to facilitate the formation of the hexahydropyrrolo[2,3-b]indole (HPI) moiety of okaramine C. The cytochrome P450 monooxygenase okaD then likely catalyzes formation of the eight-membered ring of okaramine A. The dioxygenase okaE further forms the unusual 2-dimethyl-3-methyl-azetidine ring to yield 12-deshydroxyl okaramine E, as well as the hydroxylation of 12-deshydroxyl okaramine E to produce okaramine E. The cytochrome P450 monoxygenase okaG converts 12-deshydroxyl okaramine E into 3-desmethyl okaramine B which is further methylated by the methyltransferase okaF into okaramine B. In a shunt pathway, okaG and okaF together are also able to convert okaramine E into okaramine D. Okaramine H is produced by nonenzymatic conversion from okaramine A. The protein is Cytochrome P450 monooxygenase okaG of Penicillium ochrochloron.